The chain runs to 298 residues: Glutamyl-Q tRNA(Asp) synthetase (298 aa).

L-glutamate contacts are provided by residues 12-16 (RFAPT) and Glu48. Residues 15 to 25 (PTPSGYLHFGS) carry the 'HIGH' region motif. Zn(2+) contacts are provided by Cys104, Cys106, Tyr118, and Cys122. L-glutamate is bound by residues Tyr175 and Arg193. A 'KMSKS' region motif is present at residues 231 to 235 (KLGKS). Lys234 lines the ATP pocket.

The protein belongs to the class-I aminoacyl-tRNA synthetase family. GluQ subfamily. Zn(2+) serves as cofactor.

Catalyzes the tRNA-independent activation of glutamate in presence of ATP and the subsequent transfer of glutamate onto a tRNA(Asp). Glutamate is transferred on the 2-amino-5-(4,5-dihydroxy-2-cyclopenten-1-yl) moiety of the queuosine in the wobble position of the QUC anticodon. The sequence is that of Glutamyl-Q tRNA(Asp) synthetase from Pseudomonas fluorescens (strain ATCC BAA-477 / NRRL B-23932 / Pf-5).